A 205-amino-acid polypeptide reads, in one-letter code: Large ribosomal subunit protein uL4 (205 aa).

The disordered stretch occupies residues 44–79; that stretch reads RAGTKAQKTRREVSGSGAKPWRQKGTGRARAGSSRS.

It belongs to the universal ribosomal protein uL4 family. As to quaternary structure, part of the 50S ribosomal subunit.

In terms of biological role, one of the primary rRNA binding proteins, this protein initially binds near the 5'-end of the 23S rRNA. It is important during the early stages of 50S assembly. It makes multiple contacts with different domains of the 23S rRNA in the assembled 50S subunit and ribosome. Forms part of the polypeptide exit tunnel. The chain is Large ribosomal subunit protein uL4 from Coxiella burnetii (strain Dugway 5J108-111).